A 185-amino-acid chain; its full sequence is Ribosome-recycling factor (185 aa).

Belongs to the RRF family.

It is found in the cytoplasm. Functionally, responsible for the release of ribosomes from messenger RNA at the termination of protein biosynthesis. May increase the efficiency of translation by recycling ribosomes from one round of translation to another. This is Ribosome-recycling factor from Wolbachia sp. subsp. Brugia malayi (strain TRS).